The sequence spans 748 residues: Pentatricopeptide repeat-containing protein At3g13880 (748 aa).

17 PPR repeats span residues 46 to 80 (DSEGYKILFQTAAKSGSVVLGKLAHGHMIKSSLNP), 81 to 111 (CLYLLNNLLNMYCKCRELGFARQLFDRMPER), 112 to 146 (NIISFNSLISGYTQMGFYEQAMELFLEAREANLKL), 147 to 181 (DKFTYAGALGFCGERCDLDLGELLHGLVVVNGLSQ), 182 to 212 (QVFLINVLIDMYSKCGKLDQAMSLFDRCDER), 213 to 247 (DQVSWNSLISGYVRVGAAEEPLNLLAKMHRDGLNL), 248 to 285 (TTYALGSVLKACCINLNEGFIEKGMAIHCYTAKLGMEF), 286 to 316 (DIVVRTALLDMYAKNGSLKEAIKLFSLMPSK), 317 to 356 (NVVTYNAMISGFLQMDEITDEASSEAFKLFMDMQRRGLEP), 357 to 391 (SPSTFSVVLKACSAAKTLEYGRQIHALICKNNFQS), 392 to 422 (DEFIGSALIELYALMGSTEDGMQCFASTSKQ), 423 to 457 (DIASWTSMIDCHVQNEQLESAFDLFRQLFSSHIRP), 458 to 492 (EEYTVSLMMSACADFAALSSGEQIQGYAIKSGIDA), 493 to 523 (FTSVKTSSISMYAKSGNMPLANQVFIEVQNP), 524 to 558 (DVATYSAMISSLAQHGSANEALNIFESMKTHGIKP), 559 to 589 (NQQAFLGVLIACCHGGLVTQGLKYFQCMKND), and 595 to 629 (NEKHFTCLVDLLGRTGRLSDAENLILSSGFQDHPV). Positions 630–705 (TWRALLSSCR…EPALSWIVIG (76 aa)) are type E motif. The type E(+) motif stretch occupies residues 706–736 (NQTHSFAVADLSHPSSQMIYTMLETMDNVDF).

It belongs to the PPR family. PCMP-E subfamily.

In Arabidopsis thaliana (Mouse-ear cress), this protein is Pentatricopeptide repeat-containing protein At3g13880 (PCMP-E89).